Here is a 560-residue protein sequence, read N- to C-terminus: Embryonal Fyn-associated substrate (560 aa).

The region spanning 5 to 68 is the SH3 domain; sequence TSAQLARALY…PANRVKLLPA (64 aa). 2 disordered regions span residues 176–219 and 241–372; these read VVPQ…LYAA and ANGE…NEYE. Positions 198–210 are enriched in basic and acidic residues; that stretch reads AELERDPEWEGGR. Tyr-253 carries the post-translational modification Phosphotyrosine; by SRC. Residues 259 to 268 are compositionally biased toward pro residues; sequence GPEPPSPEPP. 2 short sequence motifs (SH3-binding) span residues 304 to 310 and 334 to 340; these read RPLPALP and RPLPPPP. Low complexity predominate over residues 305–315; it reads PLPALPVSEAP. The span at 351–361 shows a compositional bias: basic and acidic residues; it reads PEGDPECREVA. The tract at residues 437-487 is divergent helix-loop-helix motif; that stretch reads FYAGQCQSHYSALQAAVAALVASTQANQPPCLFVPHGKRVVVAAHRLVFVG.

Belongs to the CAS family. Post-translationally, phosphorylated on multiple tyrosine residues. Phosphorylated on tyrosines by FYN and SRC. As to expression, widely expressed. Higher levels found in placenta and embryo. Lower levels found in brain, brainstem, muscle and lung. No expression in liver and intestine.

Docking protein which plays a central coordinating role for tyrosine-kinase-based signaling related to cell adhesion. May serve as an activator of SRC and a downstream effector. Interacts with the SH3 domain of FYN and with CRK, SRC, and YES. The polypeptide is Embryonal Fyn-associated substrate (Efs) (Mus musculus (Mouse)).